The chain runs to 524 residues: MDLTLWTYEGPPHVGAMRIAASMQGVHYVLHAPQGDTYADLLFTMIERRGQRPPVTYTTFQARDLGGDTAELVKRHVREAVDRFQPDALLVGESCTAELIQDQPGALAQGMGLTMPVVSLELPAYSKKENWGAAETLYQLVRGLLKQQVPAEPKHDPKRWQQQGRRPRVNLLGPSLLGFRCRDDVLEVQTLLTMHGIDVAVVAPLGAGVEDVHRLPEADLNICLYPEVAESTCLWLERNFGMPFSRTVPIGVGATHDFLVEVHTALGLEPPSPQEGYRRSRLPWYSESVDSTYLTGKRVFIFGDGSHAIAAARICSEELGFQVVGLGTYSREMARPVRAAAKGLGLEALICDDYLAVEAAMAEAAPELVLGTQMERHSAKRLGIPCAVISTPMHVQDVPARMSPQMGWEGANVIFDSWVHPLMMGLEEHLIGMFRHDFEFVDGHQSHLGHAGGSGASQESALSDVPEADEGYVVWTADGEAELKKIPFFVRGKVRRNAEAYARQVGCREISSETLYDAKAHFKA.

D36 contacts [4Fe-4S] cluster. D290 serves as the catalytic Proton donor. 425–426 (GL) serves as a coordination point for substrate.

Belongs to the ChlB/BchB/BchZ family. In terms of assembly, protochlorophyllide reductase is composed of three subunits; ChlL, ChlN and ChlB. Forms a heterotetramer of two ChlB and two ChlN subunits. [4Fe-4S] cluster is required as a cofactor.

It carries out the reaction chlorophyllide a + oxidized 2[4Fe-4S]-[ferredoxin] + 2 ADP + 2 phosphate = protochlorophyllide a + reduced 2[4Fe-4S]-[ferredoxin] + 2 ATP + 2 H2O. Its pathway is porphyrin-containing compound metabolism; chlorophyll biosynthesis (light-independent). Its function is as follows. Component of the dark-operative protochlorophyllide reductase (DPOR) that uses Mg-ATP and reduced ferredoxin to reduce ring D of protochlorophyllide (Pchlide) to form chlorophyllide a (Chlide). This reaction is light-independent. The NB-protein (ChlN-ChlB) is the catalytic component of the complex. In Parasynechococcus marenigrum (strain WH8102), this protein is Light-independent protochlorophyllide reductase subunit B.